A 120-amino-acid chain; its full sequence is Cytochrome c2 iso-1 (120 aa).

A Pyrrolidone carboxylic acid modification is found at Gln1. Heme c contacts are provided by Cys15, Cys18, His19, and Met98.

This sequence belongs to the cytochrome c family. Post-translationally, binds 1 heme c group covalently per subunit.

Its function is as follows. Cytochrome c2 is found mainly in purple, non-sulfur, photosynthetic bacteria where it functions as the electron donor to the oxidized bacteriochlorophyll in the photophosphorylation pathway. However, it may also have a role in the respiratory chain and is found in some non-photosynthetic bacteria. This Rhodospirillum centenum (Rhodocista centenaria) protein is Cytochrome c2 iso-1.